The sequence spans 210 residues: PEP-dependent dihydroxyacetone kinase, ADP-binding subunit DhaL (210 aa).

One can recognise a DhaL domain in the interval 6–206 (TQIVNWLTRC…VMFMMQMLAL (201 aa)). Positions 30, 35, and 37 each coordinate Mg(2+). ADP contacts are provided by residues 38–41 (HGLN), 79–80 (AS), G121, M130, R178, and 191–193 (DPG).

As to quaternary structure, homodimer. The dihydroxyacetone kinase complex is composed of a homodimer of DhaM, a homodimer of DhaK and the subunit DhaL. DhaL also forms a complex with DhaR. Mg(2+) serves as cofactor.

Its subcellular location is the cytoplasm. It catalyses the reaction dihydroxyacetone + phosphoenolpyruvate = dihydroxyacetone phosphate + pyruvate. It participates in polyol metabolism; glycerol degradation. Its function is as follows. ADP-binding subunit of the dihydroxyacetone kinase, which is responsible for the phosphoenolpyruvate (PEP)-dependent phosphorylation of dihydroxyacetone. DhaL-ADP is converted to DhaL-ATP via a phosphoryl group transfer from DhaM and transmits it to dihydroxyacetone bound to DhaK. DhaL also acts as coactivator of the transcription activator DhaR by binding to the sensor domain of DhaR. In the presence of dihydroxyacetone, DhaL-ADP displaces DhaK and stimulates DhaR activity. In the absence of dihydroxyacetone, DhaL-ADP is converted by the PTS to DhaL-ATP, which does not bind to DhaR. In Escherichia coli (strain K12), this protein is PEP-dependent dihydroxyacetone kinase, ADP-binding subunit DhaL.